The chain runs to 66 residues: Large ribosomal subunit protein bL33c (66 aa).

It belongs to the bacterial ribosomal protein bL33 family.

The protein localises to the plastid. The protein resides in the chloroplast. In Aethionema cordifolium (Lebanon stonecress), this protein is Large ribosomal subunit protein bL33c.